We begin with the raw amino-acid sequence, 333 residues long: Autoinducer 2 import system permease protein LsrC (333 aa).

Transmembrane regions (helical) follow at residues 14–34 (LIAILCLFGLLSVIDHQYFSL), 39–59 (LVFSSAQILILLAMGATLVML), 70–90 (IAGLCAVIMGMSLNAGFSLSV), 93–113 (LLTLLLGMCAGFFNGALVTWL), 115–135 (IPAIVTTLGTLGLYRGLMLLL), 157–177 (LNISPIGWLLMILILAMAWIL), 206–226 (IQIIAFSVNGVMAALAGIVFA), 252–272 (GISLLGGTGTVIGAILGAFFL), and 284–304 (LPAWWNDFIAGFVLLAVLIFD).

It belongs to the binding-protein-dependent transport system permease family. AraH/RbsC subfamily. The complex is composed of two ATP-binding proteins (LsrA), two transmembrane proteins (LsrC and LsrD) and a solute-binding protein (LsrB).

The protein localises to the cell inner membrane. Functionally, part of the ABC transporter complex LsrABCD involved in autoinducer 2 (AI-2) import. Probably responsible for the translocation of the substrate across the membrane. This chain is Autoinducer 2 import system permease protein LsrC (lsrC), found in Photorhabdus laumondii subsp. laumondii (strain DSM 15139 / CIP 105565 / TT01) (Photorhabdus luminescens subsp. laumondii).